The sequence spans 113 residues: Class I hydrophobin POH3 (113 aa).

The N-terminal stretch at 1-21 (MFSRVIFCTFLILPLLAAATA) is a signal peptide. 4 disulfides stabilise this stretch: Cys32/Cys92, Cys39/Cys86, Cys40/Cys73, and Cys93/Cys106. Asn110 carries N-linked (GlcNAc...) asparagine glycosylation.

This sequence belongs to the fungal hydrophobin family. As to quaternary structure, self-assembles to form functional amyloid fibrils called rodlets. Self-assembly into fibrillar rodlets occurs spontaneously at hydrophobic:hydrophilic interfaces and the rodlets further associate laterally to form amphipathic monolayers. In terms of tissue distribution, expressionn is switched off in the fruiting bodies but abundantly expressed in the vegetative mycelium of both monokaryon and dikaryon.

Its subcellular location is the secreted. It is found in the cell wall. In terms of biological role, aerial growth, conidiation, and dispersal of filamentous fungi in the environment rely upon a capability of their secreting small amphipathic proteins called hydrophobins (HPBs) with low sequence identity. Class I can self-assemble into an outermost layer of rodlet bundles on aerial cell surfaces, conferring cellular hydrophobicity that supports fungal growth, development and dispersal; whereas Class II form highly ordered films at water-air interfaces through intermolecular interactions but contribute nothing to the rodlet structure. POH3 is a class I hydrophobin that causes a large drop in the water-surface tension, enabling hyphae to breach the interface and grow into the air, in both the primary and the secondary mycelium. In the latter mycelium POH3 maight also play a role in the emergence of fruiting bodies. Secreted POH3 could also play a role in facilitating lignin degradation. The chain is Class I hydrophobin POH3 from Pleurotus ostreatus (Oyster mushroom).